Here is a 262-residue protein sequence, read N- to C-terminus: uncharacterized protein (262 aa).

The first 22 residues, 1–22 (MGYLKRFALYISVMILIFAIAG), serve as a signal peptide directing secretion. Cys23 carries the N-palmitoyl cysteine lipid modification. Cys23 carries S-diacylglycerol cysteine lipidation.

It belongs to the staphylococcal tandem lipoprotein family.

Its subcellular location is the cell membrane. This is an uncharacterized protein from Staphylococcus aureus (strain NCTC 8325 / PS 47).